Reading from the N-terminus, the 178-residue chain is MORN repeat-containing protein 5 (178 aa).

3 MORN repeats span residues 8-30, 31-53, and 54-75; these read YDGD…THTR, YVGE…NGSK, and YEGT…DGLK.

The protein localises to the cell projection. It is found in the cilium. It localises to the flagellum. The polypeptide is MORN repeat-containing protein 5 (morn5) (Danio rerio (Zebrafish)).